We begin with the raw amino-acid sequence, 325 residues long: Solute-binding protein Bpro_4736 (325 aa).

An N-terminal signal peptide occupies residues 1–27; that stretch reads MKTRTLKVLKPTLALLLAASFSAGALA. 168–173 provides a ligand contact to phenylglyoxylate; that stretch reads RISPVY.

This sequence belongs to the bacterial solute-binding protein 7 family. In terms of assembly, the complex is comprised of an extracytoplasmic solute-binding protein and a heteromeric permease formed by two transmembrane proteins.

The protein resides in the periplasm. Functionally, solute-binding protein that binds phenylglyoxylate (in vitro). Probably part of a tripartite ATP-independent periplasmic (TRAP) transport system that mediates solute transport into the cytoplasm. The protein is Solute-binding protein Bpro_4736 of Polaromonas sp. (strain JS666 / ATCC BAA-500).